The chain runs to 615 residues: Medium-chain acyl-CoA ligase ACSF2, mitochondrial (615 aa).

The N-terminal 42 residues, 1–42 (MAVYVGMLRVARLCARSPRVLGARVGLSRVWQEARLWGVRPL), are a transit peptide targeting the mitochondrion. Lysine 179 is subject to N6-acetyllysine. Residue lysine 182 is modified to N6-acetyllysine; alternate. Lysine 182 carries the post-translational modification N6-succinyllysine; alternate. Lysine 199 is subject to N6-acetyllysine. 263-271 (TSGTTGSPK) contributes to the ATP binding site. N6-acetyllysine occurs at positions 340 and 398. Lysine 478 carries the N6-succinyllysine modification. Positions 493 and 508 each coordinate ATP. Lysine 510 carries the N6-acetyllysine modification. An N6-acetyllysine; alternate mark is found at lysine 544 and lysine 570. N6-succinyllysine; alternate is present on residues lysine 544 and lysine 570. Lysine 599 lines the ATP pocket. Residue lysine 599 is modified to N6-succinyllysine.

The protein belongs to the ATP-dependent AMP-binding enzyme family.

Its subcellular location is the mitochondrion. It catalyses the reaction a medium-chain fatty acid + ATP + CoA = a medium-chain fatty acyl-CoA + AMP + diphosphate. It carries out the reaction octanoate + ATP + CoA = octanoyl-CoA + AMP + diphosphate. In terms of biological role, acyl-CoA synthases catalyze the initial reaction in fatty acid metabolism, by forming a thioester with CoA. Has some preference toward medium-chain substrates. Plays a role in adipocyte differentiation. The protein is Medium-chain acyl-CoA ligase ACSF2, mitochondrial of Bos taurus (Bovine).